The sequence spans 249 residues: tRNA pseudouridine synthase A (249 aa).

Aspartate 53 serves as the catalytic Nucleophile. A substrate-binding site is contributed by tyrosine 111.

It belongs to the tRNA pseudouridine synthase TruA family. Homodimer.

The catalysed reaction is uridine(38/39/40) in tRNA = pseudouridine(38/39/40) in tRNA. Its function is as follows. Formation of pseudouridine at positions 38, 39 and 40 in the anticodon stem and loop of transfer RNAs. In Streptococcus equi subsp. equi (strain 4047), this protein is tRNA pseudouridine synthase A.